A 314-amino-acid chain; its full sequence is MASAAFEIDILLPSDLSPADLSALQKCEGKLVFLTALRRRVMLSSVTLSSYYVNGAPPDTLSLMAAFRRRFPAIIQRVLPNKMIAAALGVAPLPPGAFIQNTGPFDLCNGDSVCALPPILDVEDKLRLGSVGEEILFPLTVPLAQARELIARLVARAVQALTPNAQAQRGAEVMFYNGRKYNVTPDLRHRDAVNGVARSLVLNMIFAMNEGSLVLLSLIPNLLTLGTQDGFVNAIIQMGSATREVGQLVHQQPVPQPQDGARRFCVYDALMSWISVASRLGDVVGGKPLVRICTFEGQATISRGEKAPVIQTLL.

Belongs to the herpesviridae TRX2 protein family. Interacts with TRX1 and major capisd protein/MCP.

Its subcellular location is the virion. It is found in the host nucleus. Its function is as follows. Structural component of the T=16 icosahedral capsid. The capsid is composed of pentamers and hexamers of major capsid protein/MCP, which are linked together by heterotrimers called triplexes. These triplexes are formed by a single molecule of triplex protein 1/TRX1 and two copies of triplex protein 2/TRX2. Additionally, TRX1 is required for efficient transport of TRX2 to the nucleus, which is the site of capsid assembly. This chain is Triplex capsid protein 2, found in Equine herpesvirus 1 (strain Ab4p) (EHV-1).